Reading from the N-terminus, the 97-residue chain is Secreted transmembrane peptide 4 (97 aa).

The signal sequence occupies residues 1-33; it reads MTKNMTKKKMGLMSPNIAAFVLPMLLVLFTISS. Residues 54-67 carry the SCOOP motif motif; it reads IVFTPPSSSCGGSP. Residues 60–62 carry the SxS motif essential for MIK2 binding motif; sequence SSS. Residues 75-97 are disordered; sequence WMPRRPCRRTRPPGTNIPVSQSP.

Belongs to the serine rich endogenous peptide (SCOOP) phytocytokine family. As to quaternary structure, interacts with MIK2 (via extracellular leucine-rich repeat domain); this interaction triggers the formation of complex between MIK2 and the BAK1/SERK3 and SERK4 coreceptors, and subsequent BAK1 activation by phosphorylation. As to expression, mostly expressed in leaves and stems, and, to a lower extent, in roots, siliques, seeds and flowers.

Its subcellular location is the cell membrane. The protein resides in the secreted. It localises to the extracellular space. It is found in the apoplast. Its function is as follows. Brassicaceae-specific phytocytokine (plant endogenous peptide released into the apoplast) perceived by MIK2 in a BAK1/SERK3 and SERK4 coreceptors-dependent manner, that modulates various physiological and antimicrobial processes including growth prevention and reactive oxygen species (ROS) response regulation. Prevents general growth and development. The chain is Secreted transmembrane peptide 4 from Arabidopsis thaliana (Mouse-ear cress).